Reading from the N-terminus, the 313-residue chain is Protoheme IX farnesyltransferase (313 aa).

9 consecutive transmembrane segments (helical) span residues 35–55 (LVIFTALVGLLLAPGYIHPVL), 56–76 (AFTSILCIAVGAGASGALNMW), 98–118 (VSKPEALTFGLVLSFFSVVTL), 120–140 (ILVNWFAAALLAFTIFFYVVI), 153–173 (IVIGGAAGALPPVVAWAAAAG), 180–200 (MLLFAIIFFWTPPHFWALALF), 226–246 (ILLYTIVLVAVAFAPWPLGYF), 248–268 (AIYGITSLALGGWMLLLTLRV), and 285–305 (FKFSILYLFALFAVLLLEVIV).

The protein belongs to the UbiA prenyltransferase family. Protoheme IX farnesyltransferase subfamily.

The protein resides in the cell inner membrane. The enzyme catalyses heme b + (2E,6E)-farnesyl diphosphate + H2O = Fe(II)-heme o + diphosphate. It participates in porphyrin-containing compound metabolism; heme O biosynthesis; heme O from protoheme: step 1/1. Its function is as follows. Converts heme B (protoheme IX) to heme O by substitution of the vinyl group on carbon 2 of heme B porphyrin ring with a hydroxyethyl farnesyl side group. This chain is Protoheme IX farnesyltransferase, found in Rhodopseudomonas palustris (strain BisB18).